The primary structure comprises 239 residues: DNA repair protein RecO (239 aa).

It belongs to the RecO family.

Involved in DNA repair and RecF pathway recombination. This chain is DNA repair protein RecO, found in Cereibacter sphaeroides (strain ATCC 17029 / ATH 2.4.9) (Rhodobacter sphaeroides).